The following is a 59-amino-acid chain: Photosystem II reaction center protein K (59 aa).

The propeptide occupies 1-22 (MLNIFSLICLNSDLYSSRFFLA). Residues 38–58 (MPVIPLFFLLLAFVWQAAVSF) traverse the membrane as a helical segment.

This sequence belongs to the PsbK family. PSII is composed of 1 copy each of membrane proteins PsbA, PsbB, PsbC, PsbD, PsbE, PsbF, PsbH, PsbI, PsbJ, PsbK, PsbL, PsbM, PsbT, PsbX, PsbY, PsbZ, Psb30/Ycf12, at least 3 peripheral proteins of the oxygen-evolving complex and a large number of cofactors. It forms dimeric complexes.

Its subcellular location is the plastid. The protein localises to the chloroplast thylakoid membrane. One of the components of the core complex of photosystem II (PSII). PSII is a light-driven water:plastoquinone oxidoreductase that uses light energy to abstract electrons from H(2)O, generating O(2) and a proton gradient subsequently used for ATP formation. It consists of a core antenna complex that captures photons, and an electron transfer chain that converts photonic excitation into a charge separation. This Oenothera elata subsp. hookeri (Hooker's evening primrose) protein is Photosystem II reaction center protein K.